We begin with the raw amino-acid sequence, 446 residues long: 3-phosphoshikimate 1-carboxyvinyltransferase (446 aa).

The 3-phosphoshikimate site is built by Lys35, Ser36, and Arg40. Position 35 (Lys35) interacts with phosphoenolpyruvate. Positions 108 and 137 each coordinate phosphoenolpyruvate. 3-phosphoshikimate-binding residues include Ser182, Gln184, Asp332, and Lys359. A phosphoenolpyruvate-binding site is contributed by Gln184. Residue Asp332 is the Proton acceptor of the active site. Phosphoenolpyruvate is bound by residues Arg363 and Arg405.

It belongs to the EPSP synthase family. As to quaternary structure, monomer.

It localises to the cytoplasm. It carries out the reaction 3-phosphoshikimate + phosphoenolpyruvate = 5-O-(1-carboxyvinyl)-3-phosphoshikimate + phosphate. It functions in the pathway metabolic intermediate biosynthesis; chorismate biosynthesis; chorismate from D-erythrose 4-phosphate and phosphoenolpyruvate: step 6/7. Its function is as follows. Catalyzes the transfer of the enolpyruvyl moiety of phosphoenolpyruvate (PEP) to the 5-hydroxyl of shikimate-3-phosphate (S3P) to produce enolpyruvyl shikimate-3-phosphate and inorganic phosphate. The sequence is that of 3-phosphoshikimate 1-carboxyvinyltransferase from Acaryochloris marina (strain MBIC 11017).